We begin with the raw amino-acid sequence, 421 residues long: Serine--tRNA ligase (421 aa).

L-serine is bound at residue Thr231–Glu233. Arg262 to Glu264 serves as a coordination point for ATP. Glu285 serves as a coordination point for L-serine. An ATP-binding site is contributed by Glu349 to Ser352. Ser384 serves as a coordination point for L-serine.

Belongs to the class-II aminoacyl-tRNA synthetase family. Type-1 seryl-tRNA synthetase subfamily. Homodimer. The tRNA molecule binds across the dimer.

The protein localises to the cytoplasm. The catalysed reaction is tRNA(Ser) + L-serine + ATP = L-seryl-tRNA(Ser) + AMP + diphosphate + H(+). It carries out the reaction tRNA(Sec) + L-serine + ATP = L-seryl-tRNA(Sec) + AMP + diphosphate + H(+). It functions in the pathway aminoacyl-tRNA biosynthesis; selenocysteinyl-tRNA(Sec) biosynthesis; L-seryl-tRNA(Sec) from L-serine and tRNA(Sec): step 1/1. Catalyzes the attachment of serine to tRNA(Ser). Is also able to aminoacylate tRNA(Sec) with serine, to form the misacylated tRNA L-seryl-tRNA(Sec), which will be further converted into selenocysteinyl-tRNA(Sec). The polypeptide is Serine--tRNA ligase (Hydrogenobaculum sp. (strain Y04AAS1)).